A 470-amino-acid chain; its full sequence is Chitin deacetylase 1 (470 aa).

An N-terminal signal peptide occupies residues 1-19 (MFTFAAFSALLISLAGVVA). N-linked (GlcNAc...) asparagine glycans are attached at residues N101 and N121. A disulfide bridge connects residues C155 and C363. Positions 159-358 (NVWGLSYDDG…VLANGTYQLK (200 aa)) constitute a NodB homology domain. D166 (proton acceptor) is an active-site residue. D166 contacts acetate. 3 residues coordinate Co(2+): D167, H216, and H220. Y257 is an acetate binding site. H331 acts as the Proton donor in catalysis. N352, N378, and N440 each carry an N-linked (GlcNAc...) asparagine glycan. The interval 406-447 (EVSAPSEATGSTAAGSAASTTSGSGASASTGAASNTSSSGSG) is disordered. The span at 408-447 (SAPSEATGSTAAGSAASTTSGSGASASTGAASNTSSSGSG) shows a compositional bias: low complexity. Residue S444 is the site of GPI-anchor amidated serine attachment. Positions 445–470 (GSGRSATMGGALIALAAVAVGMVYVA) are cleaved as a propeptide — removed in mature form.

Belongs to the polysaccharide deacetylase family. Co(2+) serves as cofactor.

It is found in the secreted. Its subcellular location is the cell wall. The protein resides in the cell membrane. The enzyme catalyses [(1-&gt;4)-N-acetyl-beta-D-glucosaminyl](n) + n H2O = chitosan + n acetate. Hydrolyzes the N-acetamido groups of N-acetyl-D-glucosamine residues in chitin to form chitosan and acetate. Chitosan is required to anchor melanin to the cell wall, for maintenance of cell wall integrity, and for proper cytokinesis. Plays a major role in synthesizing cell wall chitosan during host infection; chitosan offers an advantage during infection as it is less readily detected than chitin by host immunosurveillance mechanisms. The sequence is that of Chitin deacetylase 1 from Cryptococcus neoformans var. grubii serotype A (strain H99 / ATCC 208821 / CBS 10515 / FGSC 9487) (Filobasidiella neoformans var. grubii).